Consider the following 100-residue polypeptide: Urease subunit gamma (100 aa).

It belongs to the urease gamma subunit family. As to quaternary structure, heterotrimer of UreA (gamma), UreB (beta) and UreC (alpha) subunits. Three heterotrimers associate to form the active enzyme.

It localises to the cytoplasm. The enzyme catalyses urea + 2 H2O + H(+) = hydrogencarbonate + 2 NH4(+). It participates in nitrogen metabolism; urea degradation; CO(2) and NH(3) from urea (urease route): step 1/1. This chain is Urease subunit gamma, found in Bradyrhizobium diazoefficiens (strain JCM 10833 / BCRC 13528 / IAM 13628 / NBRC 14792 / USDA 110).